The chain runs to 296 residues: Uracil phosphoribosyltransferase, chloroplastic (296 aa).

A chloroplast-targeting transit peptide spans 1–61; the sequence is MACSIGNAFR…SSSLSRRTIR (61 aa). The residue at position 2 (Ala-2) is an N-acetylalanine. Position 148 to 151 (148 to 151) interacts with GTP; it reads REPI. 5-phospho-alpha-D-ribose 1-diphosphate is bound by residues Arg-158, Arg-183, Asp-211, 216-219, and Asp-282; that span reads TGGT. Residue 281–283 coordinates uracil; that stretch reads GDA.

It belongs to the UPRTase family. It depends on Mg(2+) as a cofactor.

The protein resides in the plastid. Its subcellular location is the chloroplast. The catalysed reaction is UMP + diphosphate = 5-phospho-alpha-D-ribose 1-diphosphate + uracil. Its pathway is pyrimidine metabolism; UMP biosynthesis via salvage pathway; UMP from uracil: step 1/1. With respect to regulation, allosterically activated by GTP. In terms of biological role, uracil phosphoribosyltransferase (UPRT) that catalyzes the conversion of uracil and 5-phospho-alpha-D-ribose 1-diphosphate (PRPP) to UMP and diphosphate. Is probably the only functional UPRT, since the dual-domain proteins of the UKL family seem to lack this activity. The chain is Uracil phosphoribosyltransferase, chloroplastic (UPP) from Arabidopsis thaliana (Mouse-ear cress).